Consider the following 208-residue polypeptide: Regulator of Ty1 transposition protein 105 (208 aa).

Positions Gly-28–Glu-105 are disordered. The span at Arg-33–Thr-42 shows a compositional bias: polar residues. Residues Ile-60–Ile-71 show a composition bias toward low complexity. A compositionally biased stretch (basic and acidic residues) spans Glu-94–Glu-105.

The protein resides in the cytoplasm. It is found in the nucleus. Its function is as follows. Involved in regulation of Ty1 transposition. Inhibits Ty1 transposition at a post-transcriptional and pre-integrational stage of the Ty1 retrotransposition cycle. This is Regulator of Ty1 transposition protein 105 (RTT105) from Saccharomyces cerevisiae (strain YJM789) (Baker's yeast).